The chain runs to 188 residues: dCTP deaminase (188 aa).

Residues 111 to 116 (KSTYAR), 135 to 137 (TLE), Gln156, Tyr170, and Gln180 each bind dCTP. The active-site Proton donor/acceptor is the Glu137.

This sequence belongs to the dCTP deaminase family. Homotrimer.

The enzyme catalyses dCTP + H2O + H(+) = dUTP + NH4(+). Its pathway is pyrimidine metabolism; dUMP biosynthesis; dUMP from dCTP (dUTP route): step 1/2. Catalyzes the deamination of dCTP to dUTP. The protein is dCTP deaminase of Pseudomonas fluorescens (strain Pf0-1).